The following is a 260-amino-acid chain: Acetylglutamate kinase (260 aa).

Residues 41–42, Arg-63, and Asn-157 contribute to the substrate site; that span reads GG.

This sequence belongs to the acetylglutamate kinase family. ArgB subfamily.

Its subcellular location is the cytoplasm. It catalyses the reaction N-acetyl-L-glutamate + ATP = N-acetyl-L-glutamyl 5-phosphate + ADP. The protein operates within amino-acid biosynthesis; L-arginine biosynthesis; N(2)-acetyl-L-ornithine from L-glutamate: step 2/4. Catalyzes the ATP-dependent phosphorylation of N-acetyl-L-glutamate. The polypeptide is Acetylglutamate kinase (Acidobacterium capsulatum (strain ATCC 51196 / DSM 11244 / BCRC 80197 / JCM 7670 / NBRC 15755 / NCIMB 13165 / 161)).